A 314-amino-acid chain; its full sequence is MHAYLHCLSHSPLVGYVDPAQEVLDEVNGVIASARERIAAFSPELVVLFAPDHYNGFFYDVMPPFCLGVGATAIGDFGSAAGELPVPVELAEACAHAVMKSGIDLAVSYCMQVDHGFAQPLEFLLGGLDKVPVLPVFINGVATPLPGFQRTRMLGEAIGRFTSTLNKRVLFLGAGGLSHQPPVPELAKADAHMRDRLLGSGKDLPATERELRQQRVISAAEKFVEDQRTLHPLNPIWDNQFMTLLEQGRIQELDAVSNEELSAIAGKSTHEIKTWVAAFAAISAFGNWRSEGRYYRPIPEWIAGFGSLSARTEN.

Catalysis depends on histidine 115, which acts as the Proton donor. The active-site Proton acceptor is the histidine 179.

This sequence belongs to the LigB/MhpB extradiol dioxygenase family. In terms of assembly, homotetramer. The cofactor is Fe(2+).

The catalysed reaction is 3-(2,3-dihydroxyphenyl)propanoate + O2 = (2Z,4E)-2-hydroxy-6-oxonona-2,4-dienedioate + H(+). The enzyme catalyses (2E)-3-(2,3-dihydroxyphenyl)prop-2-enoate + O2 = (2Z,4E,7E)-2-hydroxy-6-oxonona-2,4,7-trienedioate + H(+). It participates in aromatic compound metabolism; 3-phenylpropanoate degradation. Catalyzes the non-heme iron(II)-dependent oxidative cleavage of 2,3-dihydroxyphenylpropionic acid and 2,3-dihydroxicinnamic acid into 2-hydroxy-6-ketononadienedioate and 2-hydroxy-6-ketononatrienedioate, respectively. This is 2,3-dihydroxyphenylpropionate/2,3-dihydroxicinnamic acid 1,2-dioxygenase from Escherichia coli O81 (strain ED1a).